Consider the following 227-residue polypeptide: Cytidylate kinase (227 aa).

Position 7 to 15 (7 to 15 (GPAGSGKST)) interacts with ATP.

Belongs to the cytidylate kinase family. Type 1 subfamily.

The protein localises to the cytoplasm. It catalyses the reaction CMP + ATP = CDP + ADP. The enzyme catalyses dCMP + ATP = dCDP + ADP. The chain is Cytidylate kinase from Salinibacter ruber (strain DSM 13855 / M31).